We begin with the raw amino-acid sequence, 331 residues long: Oxygen-evolving enhancer protein 1-2, chloroplastic (331 aa).

Residues 1-57 constitute a chloroplast transit peptide; the sequence is MATSLQAAATFLQPAKIAASPSRNVHLRSNQTVGKSFGLDSSQARLTCSLHSDLKDF. Residues 58 to 84 constitute a thylakoid transit peptide; it reads AGKCSDAAKIAGFALATSALVVSGAGA.

This sequence belongs to the PsbO family.

The protein resides in the plastid. The protein localises to the chloroplast thylakoid membrane. Its function is as follows. Stabilizes the manganese cluster which is the primary site of water splitting. Regulates dephosphorylation and turnover of the PSII reaction center D1 protein. This is Oxygen-evolving enhancer protein 1-2, chloroplastic (PSBO2) from Arabidopsis thaliana (Mouse-ear cress).